A 292-amino-acid chain; its full sequence is Geranyl diphosphate 2-C-methyltransferase (292 aa).

The protein belongs to the geranyl diphosphate 2-C-methyltransferase family. Requires Mg(2+) as cofactor.

It carries out the reaction (2E)-geranyl diphosphate + S-adenosyl-L-methionine = (E)-2-methylgeranyl diphosphate + S-adenosyl-L-homocysteine + H(+). Catalyzes the SAM-dependent methylation of geranyl diphosphate (GPP) to yield (E)-2-methylgeranyl diphosphate (2-MeGPP). The sequence is that of Geranyl diphosphate 2-C-methyltransferase from Streptomyces coelicolor (strain ATCC BAA-471 / A3(2) / M145).